A 941-amino-acid chain; its full sequence is RNA-directed RNA polymerase (941 aa).

Residues 875–918 (SARQGGMGLPPPPPPPLGGGGMAGPPPPPFMGLRPESSVPTSVP) form a disordered region. Residues 905–918 (MGLRPESSVPTSVP) show a composition bias toward low complexity.

As to quaternary structure, forms a ribonucleoprotein complex with the 23S RNA, where a single polymerase molecule binds to a single viral RNA genome. Since the viral RNA is not encapsidated, ribonucleoprotein complex formation appears to be the strategy to survive in the host as persistent virus.

It is found in the host cytoplasm. It carries out the reaction RNA(n) + a ribonucleoside 5'-triphosphate = RNA(n+1) + diphosphate. RNA-directed RNA polymerase that replicates the viral (+) and (-) genome. The polypeptide is RNA-directed RNA polymerase (Saccharomyces 23S RNA narnavirus (ScNV-23S)).